The following is a 119-amino-acid chain: Ribonuclease P protein component (119 aa).

Belongs to the RnpA family. Consists of a catalytic RNA component (M1 or rnpB) and a protein subunit.

The enzyme catalyses Endonucleolytic cleavage of RNA, removing 5'-extranucleotides from tRNA precursor.. Functionally, RNaseP catalyzes the removal of the 5'-leader sequence from pre-tRNA to produce the mature 5'-terminus. It can also cleave other RNA substrates such as 4.5S RNA. The protein component plays an auxiliary but essential role in vivo by binding to the 5'-leader sequence and broadening the substrate specificity of the ribozyme. The sequence is that of Ribonuclease P protein component from Corynebacterium diphtheriae (strain ATCC 700971 / NCTC 13129 / Biotype gravis).